A 131-amino-acid polypeptide reads, in one-letter code: Heterochromatin silencing protein rss1 (131 aa).

As to quaternary structure, monomer.

The protein resides in the cytoplasm. The protein localises to the nucleus. Required for heterochromatin silencing within pericentromeric repeats and at telomers. Facilitates the recruitment of Clr6 histone deacetylase (HDAC) by interacting with histones. Also interacts with Rad25, which mediates heterochromatin silencing in DNA repeats by recruiting the RITS complex. Together with Rad25, forms a regulatory hub that defines heterochromatin silencing within tandem repeats via linking RNAi and HDAC. This chain is Heterochromatin silencing protein rss1 (rss1), found in Schizosaccharomyces pombe (strain 972 / ATCC 24843) (Fission yeast).